The sequence spans 129 residues: UPF0225 protein XOO0258 (129 aa).

This sequence belongs to the UPF0225 family.

The sequence is that of UPF0225 protein XOO0258 from Xanthomonas oryzae pv. oryzae (strain MAFF 311018).